The following is an 80-amino-acid chain: DNA-binding protein HU-like (80 aa).

The protein belongs to the bacterial histone-like protein family.

In terms of biological role, histone-like DNA-binding protein which is capable of wrapping DNA to stabilize it, and thus to prevent its denaturation under extreme environmental conditions. The sequence is that of DNA-binding protein HU-like from Rickettsia conorii (strain ATCC VR-613 / Malish 7).